The following is a 65-amino-acid chain: Large ribosomal subunit protein bL35 (65 aa).

Residues 1-26 (MPKIKTVRGAAKRFKKTASGGFKRKQ) are disordered. Positions 10 to 26 (AAKRFKKTASGGFKRKQ) are enriched in basic residues.

The protein belongs to the bacterial ribosomal protein bL35 family.

This is Large ribosomal subunit protein bL35 from Mannheimia succiniciproducens (strain KCTC 0769BP / MBEL55E).